Reading from the N-terminus, the 288-residue chain is Probable sulfate transport system permease protein cysT (288 aa).

Helical transmembrane passes span Ile2–Phe22, Leu28–Leu48, Phe77–Val97, Thr112–Phe132, Ile149–Val169, Thr196–Phe218, Ser227–Phe247, and Ser257–Asn277. Residues Tyr73–Asn277 form the ABC transmembrane type-1 domain.

Belongs to the binding-protein-dependent transport system permease family. CysTW subfamily.

The protein localises to the plastid. The protein resides in the chloroplast membrane. Part of the ABC transporter complex cysAWTP (TC 3.A.1.6.1) involved in sulfate/thiosulfate import. Probably responsible for the translocation of the substrate across the membrane. This Marchantia polymorpha (Common liverwort) protein is Probable sulfate transport system permease protein cysT (cysT).